Here is a 109-residue protein sequence, read N- to C-terminus: Small ribosomal subunit protein bS6 (109 aa).

It belongs to the bacterial ribosomal protein bS6 family.

Functionally, binds together with bS18 to 16S ribosomal RNA. The protein is Small ribosomal subunit protein bS6 of Ehrlichia canis (strain Jake).